Reading from the N-terminus, the 173-residue chain is Large ribosomal subunit protein uL10 (173 aa).

This sequence belongs to the universal ribosomal protein uL10 family. Part of the ribosomal stalk of the 50S ribosomal subunit. The N-terminus interacts with L11 and the large rRNA to form the base of the stalk. The C-terminus forms an elongated spine to which L12 dimers bind in a sequential fashion forming a multimeric L10(L12)X complex.

Functionally, forms part of the ribosomal stalk, playing a central role in the interaction of the ribosome with GTP-bound translation factors. This Bifidobacterium adolescentis (strain ATCC 15703 / DSM 20083 / NCTC 11814 / E194a) protein is Large ribosomal subunit protein uL10.